Consider the following 373-residue polypeptide: Ras association domain-containing protein 7 (373 aa).

Residues A6–P89 enclose the Ras-associating domain. The segment at C122–G150 is disordered. Coiled-coil stretches lie at residues W175–A227 and Q248–Q297. The tract at residues G300–A356 is disordered.

As to quaternary structure, interacts with MAP2K7 and GTP-bound NRAS. In terms of processing, polyubiquitinated and degraded by the proteasome upon prolonged stress stimuli.

The protein resides in the cytoplasm. Its subcellular location is the cytoskeleton. It is found in the microtubule organizing center. It localises to the centrosome. Functionally, negatively regulates stress-induced JNK activation and apoptosis by promoting MAP2K7 phosphorylation and inhibiting its ability to activate JNK. Following prolonged stress, anti-apoptotic effect stops because of degradation of RASSF7 protein via the ubiquitin-proteasome pathway. Required for the activation of AURKB and chromosomal congression during mitosis where it stimulates microtubule polymerization. This chain is Ras association domain-containing protein 7 (RASSF7), found in Homo sapiens (Human).